The primary structure comprises 207 residues: Superoxide dismutase [Mn] (207 aa).

4 residues coordinate Mn(2+): His27, His82, Asp169, and His173.

The protein belongs to the iron/manganese superoxide dismutase family. The cofactor is Mn(2+).

The enzyme catalyses 2 superoxide + 2 H(+) = H2O2 + O2. In terms of biological role, destroys superoxide anion radicals which are normally produced within the cells and which are toxic to biological systems. This chain is Superoxide dismutase [Mn] (sodA), found in Yersinia enterocolitica.